The sequence spans 300 residues: Regulatory protein NocR (300 aa).

The 59-residue stretch at 1–59 (MIQSRQLEAFRPVMLTGGMTSAANLVRITQPAISRLIRDLEEEIGISLFERTGNRLRPT) folds into the HTH lysR-type domain. Positions 19-38 (MTSAANLVRITQPAISRLIR) form a DNA-binding region, H-T-H motif.

This sequence belongs to the LysR transcriptional regulatory family.

Positive regulatory protein for the noc operon involved in nopaline catabolism and uptake. The protein is Regulatory protein NocR (nocR) of Agrobacterium tumefaciens (strain T37).